Reading from the N-terminus, the 186-residue chain is UPF0301 protein APL_0232 (186 aa).

It belongs to the UPF0301 (AlgH) family.

In Actinobacillus pleuropneumoniae serotype 5b (strain L20), this protein is UPF0301 protein APL_0232.